Here is a 494-residue protein sequence, read N- to C-terminus: Fumigaclavine B O-acetyltransferase easN (494 aa).

This sequence belongs to the fumigaclavine B O-acetyltransferase family. As to quaternary structure, monomer.

The catalysed reaction is fumigaclavine B + acetyl-CoA = fumigaclavine A + CoA. The protein operates within alkaloid biosynthesis; ergot alkaloid biosynthesis. Functionally, fumigaclavine B O-acetyltransferase; part of the gene cluster that mediates the biosynthesis of fumiclavanine C, a fungal ergot alkaloid. DmaW catalyzes the first step of ergot alkaloid biosynthesis by condensing dimethylallyl diphosphate (DMAP) and tryptophan to form 4-dimethylallyl-L-tryptophan. The second step is catalyzed by the methyltransferase easF that methylates 4-dimethylallyl-L-tryptophan in the presence of S-adenosyl-L-methionine, resulting in the formation of 4-dimethylallyl-L-abrine. The catalase easC and the FAD-dependent oxidoreductase easE then transform 4-dimethylallyl-L-abrine to chanoclavine-I which is further oxidized by EasD in the presence of NAD(+), resulting in the formation of chanoclavine-I aldehyde. EasA reduces chanoclavine-I aldehyde to dihydrochanoclavine-I aldehyde that spontaneously dehydrates to form 6,8-dimethyl-6,7-didehydroergoline. EasG then catalyzes the reduction of 6,8-dimethyl-6,7-didehydroergoline to form festuclavine. Hydrolysis of festuclavine by easM then leads to the formation of fumigaclavine B which is in turn acetylated by easN to fumigaclavine A. Finally, easL catalyzes the conversion of fumigaclavine A into fumigaclavine C by attaching a dimethylallyl moiety to C-2 of the indole nucleus. The sequence is that of Fumigaclavine B O-acetyltransferase easN from Aspergillus fumigatus (strain ATCC MYA-4609 / CBS 101355 / FGSC A1100 / Af293) (Neosartorya fumigata).